The primary structure comprises 780 residues: Aconitate hydratase, mitochondrial (780 aa).

A mitochondrion-targeting transit peptide spans 1-27 (MAPYSLLVTRLQKALGVRQYHVASVLC). Lys31 is subject to N6-succinyllysine. Lys50 bears the N6-acetyllysine; alternate mark. Lys50 is subject to N6-succinyllysine; alternate. Gln99 is a binding site for substrate. N6-acetyllysine; alternate is present on residues Lys138 and Lys144. N6-succinyllysine; alternate occurs at positions 138 and 144. 192–194 (DSH) lines the substrate pocket. Lys233 is subject to N6-acetyllysine; alternate. Lys233 bears the N6-succinyllysine; alternate mark. A [4Fe-4S] cluster-binding site is contributed by Cys385. Lys411 carries the post-translational modification N6-succinyllysine. [4Fe-4S] cluster-binding residues include Cys448 and Cys451. Substrate contacts are provided by Arg474 and Arg479. Lys517 and Lys523 each carry N6-acetyllysine; alternate. Lys517 and Lys523 each carry N6-succinyllysine; alternate. Positions 524–537 (LEAPDADELPRSDF) are enriched in basic and acidic residues. The disordered stretch occupies residues 524–560 (LEAPDADELPRSDFDPGQDTYQHPPKDSSGQRVDVSP). Lys549 carries the N6-succinyllysine modification. The segment covering 551–560 (SSGQRVDVSP) has biased composition (polar residues). Ser559 carries the phosphoserine modification. An N6-acetyllysine; alternate modification is found at Lys573. Lys573 carries the N6-succinyllysine; alternate modification. 2 positions are modified to N6-succinyllysine: Lys577 and Lys591. Lys605 carries the post-translational modification N6-acetyllysine; alternate. Lys605 is subject to N6-succinyllysine; alternate. Arg607 contacts substrate. The residue at position 628 (Lys628) is an N6-succinyllysine. Ser670 is subject to Phosphoserine. 670-671 (SR) contributes to the substrate binding site. Lys689 carries the post-translational modification N6-succinyllysine. N6-acetyllysine; alternate occurs at positions 723 and 730. An N6-succinyllysine; alternate mark is found at Lys723 and Lys730. Residues Lys736, Lys739, and Lys743 each carry the N6-acetyllysine modification.

It belongs to the aconitase/IPM isomerase family. As to quaternary structure, monomer. The cofactor is [4Fe-4S] cluster. Post-translationally, forms covalent cross-links mediated by transglutaminase TGM2, between a glutamine and the epsilon-amino group of a lysine residue, forming homopolymers and heteropolymers.

Its subcellular location is the mitochondrion. It catalyses the reaction citrate = D-threo-isocitrate. The protein operates within carbohydrate metabolism; tricarboxylic acid cycle; isocitrate from oxaloacetate: step 2/2. Catalyzes the isomerization of citrate to isocitrate via cis-aconitate. The protein is Aconitate hydratase, mitochondrial (Aco2) of Mus musculus (Mouse).